The primary structure comprises 600 residues: Torsin-1A-interacting protein 1 (600 aa).

Over residues 1–14 (MAGEGQRAEPEREG) the composition is skewed to basic and acidic residues. Disordered regions lie at residues 1–261 (MAGE…YKES) and 310–346 (MRSIYGSFSDDDSVQKSELGNQSPSTSNQQMTGQPKS). The Nuclear segment spans residues 1–354 (MAGEGQRAEP…KSVSSVKTKR (354 aa)). At Ser61 the chain carries Phosphoserine. 3 stretches are compositionally biased toward basic and acidic residues: residues 71 to 81 (FEPRAAKEKAR), 91 to 102 (FRPDSAKEEVRE), and 116 to 125 (RLHEAEEMQT). 6 positions are modified to phosphoserine: Ser137, Ser145, Ser156, Ser158, Ser159, and Ser189. A compositionally biased stretch (low complexity) spans 192–203 (PLISLRRPPLRS). Over residues 219 to 232 (EEGETEENDQDSFD) the composition is skewed to acidic residues. Phosphothreonine is present on Thr223. Ser230, Ser233, and Ser244 each carry phosphoserine. Residues 247–261 (SGDQTTRSSSQYKES) are compositionally biased toward polar residues. Ser322 bears the Phosphoserine mark. Lys325 is covalently cross-linked (Glycyl lysine isopeptide (Lys-Gly) (interchain with G-Cter in SUMO2)). Polar residues predominate over residues 325 to 346 (KSELGNQSPSTSNQQMTGQPKS). Ser332 bears the Phosphoserine mark. The chain crosses the membrane as a helical span at residues 355 to 371 (YWPFAVIAALLIGGFLY). Topologically, residues 372–600 (TRPPEAETTA…ENDLKKGICL (229 aa)) are perinuclear space. The segment at 373 to 600 (RPPEAETTAV…ENDLKKGICL (228 aa)) is interaction with TOR1A. Positions 376–452 (EAETTAVQEF…SEQIADAYSS (77 aa)) form a coiled coil. The N-linked (GlcNAc...) asparagine glycan is linked to Asn416.

It belongs to the TOR1AIP family. In terms of assembly, interacts with ATP1B4. Interacts with TOR1A (ATP-bound). Interacts with TOR1B, TOR2A and TOR3A. Interacts with VIM.

It is found in the nucleus inner membrane. Functionally, required for nuclear membrane integrity. Induces TOR1A and TOR1B ATPase activity and is required for their location on the nuclear membrane. Binds to A- and B-type lamins. Possible role in membrane attachment and assembly of the nuclear lamina. The chain is Torsin-1A-interacting protein 1 (TOR1AIP1) from Bos taurus (Bovine).